Reading from the N-terminus, the 369-residue chain is Capsid protein (369 aa).

It is found in the host nucleus. Its subcellular location is the virion. Its function is as follows. Self-assembles to form the virion icosahedral capsid. This Avon-Heathcote Estuary associated kieseladnavirus (AHEaBV) protein is Capsid protein.